The sequence spans 559 residues: Nicotinate phosphoribosyltransferase 1 (559 aa).

Residues tyrosine 33 and threonine 221 each coordinate nicotinate. Residue histidine 224 is modified to Phosphohistidine. Arginine 331 lines the nicotinate pocket. Threonine 393 is a binding site for 5-phospho-alpha-D-ribose 1-diphosphate.

It belongs to the NAPRTase family. Mg(2+) serves as cofactor. Mn(2+) is required as a cofactor. In terms of processing, transiently phosphorylated on a His residue during the reaction cycle. Phosphorylation strongly increases the affinity for substrates and increases the rate of nicotinate D-ribonucleotide production. Dephosphorylation regenerates the low-affinity form of the enzyme, leading to product release.

It catalyses the reaction nicotinate + 5-phospho-alpha-D-ribose 1-diphosphate + ATP + H2O = nicotinate beta-D-ribonucleotide + ADP + phosphate + diphosphate. The protein operates within cofactor biosynthesis; NAD(+) biosynthesis; nicotinate D-ribonucleotide from nicotinate: step 1/1. Catalyzes the first step in the biosynthesis of NAD from nicotinic acid, the ATP-dependent synthesis of beta-nicotinate D-ribonucleotide from nicotinate and 5-phospho-D-ribose 1-phosphate. Helps prevent cellular oxidative stress via its role in NAD biosynthesis. This chain is Nicotinate phosphoribosyltransferase 1, found in Arabidopsis thaliana (Mouse-ear cress).